The following is a 938-amino-acid chain: TFIIH basal transcription factor complex helicase/translocase XPB subunit (938 aa).

The 169-residue stretch at 394 to 562 folds into the Helicase ATP-binding domain; that stretch reads FRSGNKAHQG…DLRHLVGPKL (169 aa). Position 407-414 (407-414) interacts with ATP; that stretch reads LPCGAGKT. Positions 515–518 match the DEVH box motif; that stretch reads DEVH. A Helicase C-terminal domain is found at 627-781; it reads WCTQALLEFH…SYRVLQSDMV (155 aa).

The protein belongs to the helicase family. RAD25/XPB subfamily. As to quaternary structure, component of the 7-subunit TFIIH core complex composed of XPB, XPD, SSL1, TFB1, TFB2, TFB4 and TFB5.

The catalysed reaction is Couples ATP hydrolysis with the unwinding of duplex DNA by translocating in the 3'-5' direction.. It catalyses the reaction ATP + H2O = ADP + phosphate + H(+). Its function is as follows. ATP-dependent 3'-5' DNA helicase/translocase; binds dsDNA rather than ssDNA, unzipping it in a translocase rather than classical helicase activity. Component of the general transcription factor IIH (TFIIH) core complex, involved in spliced leader RNA (SL RNA) gene transcription by RNA polymerase II. TFIIH has an essential role in transcription initiation. When the pre-initiation complex (PIC) has been established, TFIIH is required for promoter opening and promoter escape. The ATPase activity of XPB is required for promoter opening and promoter escape. The sequence is that of TFIIH basal transcription factor complex helicase/translocase XPB subunit from Trypanosoma brucei brucei (strain 927/4 GUTat10.1).